Here is a 609-residue protein sequence, read N- to C-terminus: MVKRNHKYQSGEGAQYMTRKAAMRKLQLSMQDFRRLCILKGIYPREPKHRVIAQRGSTDIKILYHRKDITFLLHEPIVWTLRDRKIFNRRIAHARAKGNNLLKNVRMANYPEIKLDHIIKERFPTFIDAIKELDDCMTLLFLFSTFPAMKVVTREITSLARRLTIEFMHYVIAAKALRKVFVSIKGYYFQAEIKGELVTWIVPHYYPFQPQRKEYVDFKIMKSFADFFTVMAGFVNYRLYNSINMVYPPQFSVSIDSDESRNNEETFVSERIAALNMDLLRSDRQGTEEEDEEIDLKLLDNDKDSEQVRKMHEEALSLSKLKNLFKGLKFFINREVPREPLVFIIRCFGGKVSWDKHLFVGSTFDETDESITHQIVDRPSLTKQYISRDYVQPQWIFDSVNQRKLLPTNKYFIGAVLPPHLSPFNRDDAIYVPPEEAAMQAGDEFEKQERAEGISDDEDEDFGMEEARKQVQLDYALVKAFREEKAEALNSGEAKKEQAEEDNEDDDQEPDQDETKKQRSEKKQKMAVVSGRVFKENPKEQKQLTKQEEALRAKMVKSRHKKLYRNLLDKQKKATKEANLLREKRQQIDKQKRKEQTQKRKAQRKEILA.

The 94-residue stretch at 320 to 413 (KLKNLFKGLK…KLLPTNKYFI (94 aa)) folds into the BRCT domain. Disordered stretches follow at residues 443–462 (DEFE…DEDF) and 488–609 (ALNS…EILA). Composition is skewed to basic and acidic residues over residues 444–453 (EFEKQERAEG) and 488–498 (ALNSGEAKKEQ). Residues 481 to 509 (FREEKAEALNSGEAKKEQAEEDNEDDDQE) adopt a coiled-coil conformation. Over residues 499 to 512 (AEEDNEDDDQEPDQ) the composition is skewed to acidic residues. 2 stretches are compositionally biased toward basic and acidic residues: residues 513–524 (DETKKQRSEKKQ) and 533–552 (VFKE…EALR). Residues 539–607 (KEQKQLTKQE…QKRKAQRKEI (69 aa)) adopt a coiled-coil conformation. The segment covering 554-564 (KMVKSRHKKLY) has biased composition (basic residues). Residues 567-609 (LLDKQKKATKEANLLREKRQQIDKQKRKEQTQKRKAQRKEILA) are compositionally biased toward basic and acidic residues.

It belongs to the pescadillo family.

The protein localises to the nucleus. It localises to the nucleolus. The protein resides in the nucleoplasm. In terms of biological role, required for maturation of ribosomal RNAs and formation of the large ribosomal subunit. The polypeptide is Pescadillo homolog (Aedes aegypti (Yellowfever mosquito)).